Consider the following 201-residue polypeptide: Myelomonocytic growth factor (201 aa).

Residues 1-23 (MCCLTPVLALALVLGAPWQALHG) form the signal peptide. Disulfide bonds link Cys-61–Cys-67 and Cys-89–Cys-99. 2 N-linked (GlcNAc...) asparagine glycosylation sites follow: Asn-123 and Asn-137.

It belongs to the IL-6 superfamily.

The protein resides in the secreted. Its function is as follows. Hematopoietic growth factor that stimulates the proliferation and colony formation of normal and transformed avian cells of the myeloid lineage. The polypeptide is Myelomonocytic growth factor (Gallus gallus (Chicken)).